The primary structure comprises 151 residues: uncharacterized protein (151 aa).

An N-acetyltransferase domain is found at Ile3–Leu151.

It belongs to the acetyltransferase family.

This is an uncharacterized protein from Bacillus subtilis (strain 168).